Consider the following 329-residue polypeptide: Glycosyltransferase family protein 64 C3 (329 aa).

An N-terminal signal peptide occupies residues 1–27 (MGVKSVRFSIWFLFVVTDLVFCRTLSG). The N-linked (GlcNAc...) asparagine glycan is linked to asparagine 99. Substrate is bound by residues 118 to 123 (SSLNAR), 139 to 141 (DDD), arginine 169, 226 to 230 (RNCED), and 271 to 284 (VGLS…RKRR). Residue aspartate 141 participates in Mn(2+) binding. Cysteine 228 and cysteine 287 are joined by a disulfide. Residue aspartate 230 is part of the active site. The interval 268–284 (VRDVGLSSRRVEHRKRR) is substrate binding.

Belongs to the glycosyltransferase 64 family. Requires Mn(2+) as cofactor.

The protein operates within protein modification; protein glycosylation. Its function is as follows. Probable glycosyltransferase. The polypeptide is Glycosyltransferase family protein 64 C3 (Arabidopsis thaliana (Mouse-ear cress)).